A 1342-amino-acid polypeptide reads, in one-letter code: DNA-directed RNA polymerase subunit beta (1342 aa).

The protein belongs to the RNA polymerase beta chain family. The RNAP catalytic core consists of 2 alpha, 1 beta, 1 beta' and 1 omega subunit. When a sigma factor is associated with the core the holoenzyme is formed, which can initiate transcription.

The enzyme catalyses RNA(n) + a ribonucleoside 5'-triphosphate = RNA(n+1) + diphosphate. Functionally, DNA-dependent RNA polymerase catalyzes the transcription of DNA into RNA using the four ribonucleoside triphosphates as substrates. The protein is DNA-directed RNA polymerase subunit beta of Histophilus somni (strain 129Pt) (Haemophilus somnus).